A 207-amino-acid polypeptide reads, in one-letter code: Microtubule-associated protein Jupiter (207 aa).

Position 30 is a phosphoserine (Ser30). Phosphothreonine occurs at positions 41 and 102. Ser111, Ser138, and Ser149 each carry phosphoserine. Disordered stretches follow at residues 129–174 and 188–207; these read KGKY…YKAG and GNQV…SGLW. Residues 136-149 show a composition bias toward low complexity; that stretch reads SGSVSSASSSVSSS. Residues 150–164 show a composition bias toward polar residues; it reads TENLKINVGNRSDGN.

The protein belongs to the MAP Jupiter family.

It is found in the nucleus. The protein localises to the cytoplasm. The protein resides in the cytoskeleton. Its subcellular location is the spindle. In terms of biological role, binds to all microtubule populations. The chain is Microtubule-associated protein Jupiter from Drosophila grimshawi (Hawaiian fruit fly).